An 86-amino-acid polypeptide reads, in one-letter code: MIKLRLKRFGKKREASYRIVAMNNLSRRDGRPLEELGYYNPRTDEVRLDVPGIVKRLQQGAQPTDTVRRILQKQNVFEQVSAKPAS.

Belongs to the bacterial ribosomal protein bS16 family.

The sequence is that of Small ribosomal subunit protein bS16 from Trichormus variabilis (strain ATCC 29413 / PCC 7937) (Anabaena variabilis).